The primary structure comprises 321 residues: MTRKKVKLAYISNDSSRKATFKKRKKGLMKKVHELSTLCGITACAIIYSPYDTNPEVWPSNSGVQRVVSEFRTLPEMDQHKKMVDQEGFLKQRIAKATETLRRQRKDSRELEMTEVMFQCLIGNMEMFHLNIVDLNDLGYMIEQYLKDVNRRIEILRNSGTEIGESSSVAVAASEGNIPMPNLVATTAPTTTIYEVGSSSSFAAVANFVNPIDLQQFRHPAAQHVGLNEQPQNLNLNLNQNYNQNQEWFMEMMNHPEQMRYQTEQMGYQFMDDNHHNHIHHQPQEHQHQIHDESSNALDAANSSSIIPVTSSSITNKTWFH.

The MADS-box domain maps to 1–61; it reads MTRKKVKLAY…DTNPEVWPSN (61 aa). Residues 89–114 adopt a coiled-coil conformation; it reads FLKQRIAKATETLRRQRKDSRELEMT.

Interacts with AGL61 and AGL62. Forms a heterodimer with AGL61. Interacts with MEE14/CBP1. Expressed in the central cell of the female gametophyte and in early endosperm. Also detected in ovaries, young siliques, roots, leaves, stems, young flowers and anthers.

It localises to the nucleus. Functionally, probable transcription factor. Controls central cell differentiation during female gametophyte development. Required for the expression of DEMETER and DD46, but not for the expression of FIS2. Probable transcription factor that may function in the maintenance of the proper function of the central cell in pollen tube attraction. The polypeptide is Agamous-like MADS-box protein AGL80 (AGL80) (Arabidopsis thaliana (Mouse-ear cress)).